Reading from the N-terminus, the 256-residue chain is Small ribosomal subunit protein eS1 (256 aa).

N-acetylalanine; partial is present on Ala2.

This sequence belongs to the eukaryotic ribosomal protein eS1 family. Component of the small ribosomal subunit. Mature ribosomes consist of a small (40S) and a large (60S) subunit. The 40S subunit contains about 33 different proteins and 1 molecule of RNA (18S). The 60S subunit contains about 49 different proteins and 3 molecules of RNA (25S, 5.8S and 5S).

The protein resides in the cytoplasm. This chain is Small ribosomal subunit protein eS1, found in Komagataella phaffii (strain GS115 / ATCC 20864) (Yeast).